Here is a 144-residue protein sequence, read N- to C-terminus: 3-hydroxyacyl-[acyl-carrier-protein] dehydratase FabZ (144 aa).

The active site involves H48.

This sequence belongs to the thioester dehydratase family. FabZ subfamily.

It is found in the cytoplasm. It carries out the reaction a (3R)-hydroxyacyl-[ACP] = a (2E)-enoyl-[ACP] + H2O. Involved in unsaturated fatty acids biosynthesis. Catalyzes the dehydration of short chain beta-hydroxyacyl-ACPs and long chain saturated and unsaturated beta-hydroxyacyl-ACPs. The sequence is that of 3-hydroxyacyl-[acyl-carrier-protein] dehydratase FabZ from Bacillus licheniformis (strain ATCC 14580 / DSM 13 / JCM 2505 / CCUG 7422 / NBRC 12200 / NCIMB 9375 / NCTC 10341 / NRRL NRS-1264 / Gibson 46).